Here is a 274-residue protein sequence, read N- to C-terminus: Bis(5'-nucleosyl)-tetraphosphatase, symmetrical (274 aa).

This sequence belongs to the Ap4A hydrolase family.

The catalysed reaction is P(1),P(4)-bis(5'-adenosyl) tetraphosphate + H2O = 2 ADP + 2 H(+). Its function is as follows. Hydrolyzes diadenosine 5',5'''-P1,P4-tetraphosphate to yield ADP. This Shewanella baltica (strain OS155 / ATCC BAA-1091) protein is Bis(5'-nucleosyl)-tetraphosphatase, symmetrical.